A 224-amino-acid polypeptide reads, in one-letter code: Polyadenylate-binding protein 2 (224 aa).

Positions 1–36 (MADEDITLNEDQLLESLEETNGEQETEIATEVEEEG) are enriched in acidic residues. Positions 1 to 40 (MADEDITLNEDQLLESLEETNGEQETEIATEVEEEGSMQI) are disordered. A coiled-coil region spans residues 9–74 (NEDQLLESLE…QSEVDKQMAG (66 aa)). One can recognise an RRM domain in the interval 96–173 (RSVYVGNVDY…RQIKVMSKRT (78 aa)).

As to quaternary structure, interacts with ZC3H3. As to expression, expressed ubiquitously in all transcriptionally active cells.

Its subcellular location is the nucleus. It localises to the cytoplasm. In terms of biological role, involved in the 3'-end formation of mRNA precursors (pre-mRNA) by the addition of a poly(A) tail of 200-250 nt to the upstream cleavage product. Stimulates poly(A) polymerase (PAPOLA) conferring processivity on the poly(A) tail elongation reaction and also controls the poly(A) tail length. Increases the affinity of poly(A) polymerase for RNA. Binds to poly(A) and to poly(G) with high affinity. May protect the poly(A) tail from degradation. Plays a role in the positive regulation of alpha-1,3 fucosylation, possibly by cooperating with swm which regulates nuclear export of fucosyltransferase FucTA. Involved in germline stem cell transit amplification, differentiation and mitosis-to-meiosis transition. The chain is Polyadenylate-binding protein 2 from Drosophila melanogaster (Fruit fly).